The following is a 284-amino-acid chain: Orotidine 5'-phosphate decarboxylase (284 aa).

Residue K95 is the Proton donor of the active site.

This sequence belongs to the OMP decarboxylase family. Type 2 subfamily.

The enzyme catalyses orotidine 5'-phosphate + H(+) = UMP + CO2. It participates in pyrimidine metabolism; UMP biosynthesis via de novo pathway; UMP from orotate: step 2/2. In Leptothrix cholodnii (strain ATCC 51168 / LMG 8142 / SP-6) (Leptothrix discophora (strain SP-6)), this protein is Orotidine 5'-phosphate decarboxylase.